A 115-amino-acid polypeptide reads, in one-letter code: Urease subunit beta (115 aa).

It belongs to the urease beta subunit family. As to quaternary structure, heterotrimer of UreA (gamma), UreB (beta) and UreC (alpha) subunits. Three heterotrimers associate to form the active enzyme.

Its subcellular location is the cytoplasm. It catalyses the reaction urea + 2 H2O + H(+) = hydrogencarbonate + 2 NH4(+). It functions in the pathway nitrogen metabolism; urea degradation; CO(2) and NH(3) from urea (urease route): step 1/1. The chain is Urease subunit beta from Arthrobacter sp. (strain FB24).